Here is a 231-residue protein sequence, read N- to C-terminus: Phosphoribosylformylglycinamidine synthase subunit PurQ (231 aa).

A Glutamine amidotransferase type-1 domain is found at 3–231 (FGVLIFPGSN…ESMVGAMAKR (229 aa)). Cys-86 serves as the catalytic Nucleophile. Active-site residues include His-203 and Glu-205.

In terms of assembly, part of the FGAM synthase complex composed of 1 PurL, 1 PurQ and 2 PurS subunits.

The protein resides in the cytoplasm. It carries out the reaction N(2)-formyl-N(1)-(5-phospho-beta-D-ribosyl)glycinamide + L-glutamine + ATP + H2O = 2-formamido-N(1)-(5-O-phospho-beta-D-ribosyl)acetamidine + L-glutamate + ADP + phosphate + H(+). The catalysed reaction is L-glutamine + H2O = L-glutamate + NH4(+). Its pathway is purine metabolism; IMP biosynthesis via de novo pathway; 5-amino-1-(5-phospho-D-ribosyl)imidazole from N(2)-formyl-N(1)-(5-phospho-D-ribosyl)glycinamide: step 1/2. Its function is as follows. Part of the phosphoribosylformylglycinamidine synthase complex involved in the purines biosynthetic pathway. Catalyzes the ATP-dependent conversion of formylglycinamide ribonucleotide (FGAR) and glutamine to yield formylglycinamidine ribonucleotide (FGAM) and glutamate. The FGAM synthase complex is composed of three subunits. PurQ produces an ammonia molecule by converting glutamine to glutamate. PurL transfers the ammonia molecule to FGAR to form FGAM in an ATP-dependent manner. PurS interacts with PurQ and PurL and is thought to assist in the transfer of the ammonia molecule from PurQ to PurL. The sequence is that of Phosphoribosylformylglycinamidine synthase subunit PurQ from Koribacter versatilis (strain Ellin345).